The primary structure comprises 1022 residues: ATPase MORC2B (1022 aa).

Alanine 2 bears the N-acetylalanine mark. ATP is bound by residues asparagine 39, serine 87–lysine 89, and arginine 99–lysine 105. Asparagine 39 is a binding site for Mg(2+). Residues lysine 285–glutamate 362 are a coiled coil. Lysine 427 contributes to the ATP binding site. The CW-type zinc finger occupies alanine 490–lysine 544. Cysteine 499, cysteine 502, cysteine 525, and cysteine 536 together coordinate Zn(2+). Positions lysine 555–proline 583 form a coiled coil. Serine 615 carries the phosphoserine modification. Lysine 649 participates in a covalent cross-link: Glycyl lysine isopeptide (Lys-Gly) (interchain with G-Cter in SUMO2). Phosphoserine occurs at positions 690, 724, 733, and 737. A Glycyl lysine isopeptide (Lys-Gly) (interchain with G-Cter in SUMO2) cross-link involves residue lysine 758. Residues serine 768 and serine 770 each carry the phosphoserine modification. Threonine 827 is subject to Phosphothreonine. Phosphoserine occurs at positions 846 and 851. A Glycyl lysine isopeptide (Lys-Gly) (interchain with G-Cter in SUMO2) cross-link involves residue lysine 922. Residues glutamine 962 to glycine 1001 are a coiled coil.

In terms of assembly, interacts with Morc2a. As to expression, protein is abundant in testes but not detected in other adult tissues examined (at protein level). Detected in germ cells with a distinct developmental-specific expression pattern but not in somatic cells such as Sertoli cells.

It is found in the nucleus. It carries out the reaction ATP + H2O = ADP + phosphate + H(+). Required for chromosomal synapsis and meiotic recombination in males and females. This Mus musculus (Mouse) protein is ATPase MORC2B.